We begin with the raw amino-acid sequence, 112 residues long: MSTKAELACVYASLILVDDDVAVTGEKINTILKAANVEVEPYWPGLFAKALEGINVKDLITNIGSGVGAAPAGGAAPAAAAAAPAAESKKEEKKKEEESDQSDDDMGFGLFD.

Positions Ala-80–Asp-112 are disordered. Over residues Glu-87–Glu-97 the composition is skewed to basic and acidic residues. Phosphoserine is present on residues Ser-99 and Ser-102.

This sequence belongs to the eukaryotic ribosomal protein P1/P2 family. As to quaternary structure, P1 and P2 exist as dimers at the large ribosomal subunit.

In terms of biological role, plays an important role in the elongation step of protein synthesis. The sequence is that of Large ribosomal subunit protein P1 (RpLP1) from Drosophila melanogaster (Fruit fly).